A 604-amino-acid chain; its full sequence is Kinesin-like protein KIN-14O (604 aa).

The stretch at 22–61 (MLNHDKDISALQEEISALRSRQRHLDHRRQEALDKLIDLK) forms a coiled coil. The 325-residue stretch at 63 to 387 (SIRVFCRVRP…LSFAKRARSI (325 aa)) folds into the Kinesin motor domain. ATP is bound at residue 141–148 (GQTGTGKT). The stretch at 383 to 443 (RARSIESSKE…EERKKLSSSA (61 aa)) forms a coiled coil. Disordered stretches follow at residues 465-511 (DSAE…KTRL) and 565-604 (SNNS…SSLT). Positions 565-574 (SNNSIDSTAA) are enriched in polar residues. A compositionally biased stretch (basic residues) spans 593–604 (LHQHRRRMSSLT).

Belongs to the TRAFAC class myosin-kinesin ATPase superfamily. Kinesin family. KIN-14 subfamily.

This chain is Kinesin-like protein KIN-14O, found in Oryza sativa subsp. japonica (Rice).